A 295-amino-acid chain; its full sequence is Elongation factor Ts (295 aa).

Positions 79-82 (TDFV) are involved in Mg(2+) ion dislocation from EF-Tu.

The protein belongs to the EF-Ts family.

It is found in the cytoplasm. In terms of biological role, associates with the EF-Tu.GDP complex and induces the exchange of GDP to GTP. It remains bound to the aminoacyl-tRNA.EF-Tu.GTP complex up to the GTP hydrolysis stage on the ribosome. The protein is Elongation factor Ts of Bacillus cytotoxicus (strain DSM 22905 / CIP 110041 / 391-98 / NVH 391-98).